Reading from the N-terminus, the 930-residue chain is Translation initiation factor IF-2 (930 aa).

Residues 27-342 (LGLDVKSHSS…APKPVTERKF (316 aa)) are disordered. A compositionally biased stretch (low complexity) spans 52–103 (KAAAPQAPAEKPVAAQPSPQKTPAKEAAPVKAEPTEAKAAAQPEAKTETAAP). Composition is skewed to basic and acidic residues over residues 112 to 128 (FKAE…ERRK) and 136 to 178 (QNKE…DGRR). The span at 183–195 (HQGFNGQKRQQPQ) shows a compositional bias: polar residues. Residues 218-245 (RSSEERFKQAQEAKEVMERQNRRKEQPK) are compositionally biased toward basic and acidic residues. Pro residues predominate over residues 251–268 (PVQPAPAPSAPAANPSPA). Positions 280–297 (ARPDKKRDDFDREEEGPR) are enriched in basic and acidic residues. Over residues 302 to 318 (NRSSQNQVRNQRNSNWN) the composition is skewed to low complexity. Residues 432–599 (ERPPVVTIMG…TVLLVAEIQE (168 aa)) form the tr-type G domain. The segment at 441–448 (GHVDHGKT) is G1. A GTP-binding site is contributed by 441–448 (GHVDHGKT). The segment at 466–470 (GITQH) is G2. The tract at residues 487 to 490 (DTPG) is G3. GTP contacts are provided by residues 487-491 (DTPGH) and 541-544 (NKID). Residues 541 to 544 (NKID) form a G4 region. The G5 stretch occupies residues 577 to 579 (SAK).

It belongs to the TRAFAC class translation factor GTPase superfamily. Classic translation factor GTPase family. IF-2 subfamily.

It is found in the cytoplasm. Functionally, one of the essential components for the initiation of protein synthesis. Protects formylmethionyl-tRNA from spontaneous hydrolysis and promotes its binding to the 30S ribosomal subunits. Also involved in the hydrolysis of GTP during the formation of the 70S ribosomal complex. The chain is Translation initiation factor IF-2 from Streptococcus sanguinis (strain SK36).